Reading from the N-terminus, the 451-residue chain is Tubulin alpha-1A chain (451 aa).

Positions 10, 11, 12, and 15 each coordinate GTP. At lysine 40 the chain carries N6-acetyllysine. GTP-binding residues include glutamate 71, alanine 99, serine 140, glycine 143, glycine 144, threonine 145, glycine 146, threonine 179, glutamate 183, asparagine 206, tyrosine 224, asparagine 228, and leucine 252. Glutamate 71 provides a ligand contact to Mg(2+). Glutamate 254 is a catalytic residue. Residue tyrosine 282 is modified to 3'-nitrotyrosine. Serine 439 is subject to Phosphoserine. 2 positions are modified to 5-glutamyl polyglutamate: glutamate 443 and glutamate 445. The residue at position 451 (tyrosine 451) is a 3'-nitrotyrosine.

Belongs to the tubulin family. As to quaternary structure, heterodimer of alpha- and beta-tubulin. A typical microtubule is a hollow water-filled tube with an outer diameter of 25 nm and an inner diameter of 15 nM. Alpha-beta heterodimers associate head-to-tail to form protofilaments running lengthwise along the microtubule wall with the beta-tubulin subunit facing the microtubule plus end conferring a structural polarity. Microtubules usually have 13 protofilaments but different protofilament numbers can be found in some organisms and specialized cells. Interacts with gamma-tubulin; the interaction allows microtubules to nucleate from the gamma-tubulin ring complex (gTuRC). Nascent microtubule interacts (via alpha-tubulin MREC motif) with TTC5/STRAP; this interaction may result in tubulin mRNA-targeted degradation. Component of sperm flagellar doublet microtubules. The cofactor is Mg(2+). Post-translationally, some glutamate residues at the C-terminus are polyglycylated, resulting in polyglycine chains on the gamma-carboxyl group. Glycylation is mainly limited to tubulin incorporated into axonemes (cilia and flagella) whereas glutamylation is prevalent in neuronal cells, centrioles, axonemes, and the mitotic spindle. Both modifications can coexist on the same protein on adjacent residues, and lowering polyglycylation levels increases polyglutamylation, and reciprocally. Cilia and flagella glycylation is required for their stability and maintenance. Flagella glycylation controls sperm motility. Some glutamate residues at the C-terminus are polyglutamylated, resulting in polyglutamate chains on the gamma-carboxyl group. Polyglutamylation plays a key role in microtubule severing by spastin (SPAST). SPAST preferentially recognizes and acts on microtubules decorated with short polyglutamate tails: severing activity by SPAST increases as the number of glutamates per tubulin rises from one to eight, but decreases beyond this glutamylation threshold. Glutamylation is also involved in cilia motility. In terms of processing, acetylation of alpha chains at Lys-40 is located inside the microtubule lumen. This modification has been correlated with increased microtubule stability, intracellular transport and ciliary assembly. Post-translationally, methylation of alpha chains at Lys-40 is found in mitotic microtubules and is required for normal mitosis and cytokinesis contributing to genomic stability. Nitration of Tyr-451 is irreversible and interferes with normal dynein intracellular distribution. In terms of processing, undergoes a tyrosination/detyrosination cycle, the cyclic removal and re-addition of a C-terminal tyrosine residue by the enzymes tubulin tyrosine carboxypeptidase (MATCAP1, VASH1 or VASH2) and tubulin tyrosine ligase (TTL), respectively. Post-translationally, tyrosination promotes microtubule interaction with CAP-Gly domain-containing proteins such as CLIP1, CLIP2 and DCTN1. Tyrosination regulates the initiation of dynein-dynactin motility via interaction with DCTN1, which brings the dynein-dynactin complex into contact with microtubules. In neurons, tyrosinated tubulins mediate the initiation of retrograde vesicle transport. Detyrosination is involved in metaphase plate congression by guiding chromosomes during mitosis: detyrosination promotes interaction with CENPE, promoting pole-proximal transport of chromosomes toward the equator. Detyrosination increases microtubules-dependent mechanotransduction in dystrophic cardiac and skeletal muscle. In cardiomyocytes, detyrosinated microtubules are required to resist to contractile compression during contraction: detyrosination promotes association with desmin (DES) at force-generating sarcomeres, leading to buckled microtubules and mechanical resistance to contraction.

The protein localises to the cytoplasm. Its subcellular location is the cytoskeleton. The protein resides in the flagellum axoneme. The catalysed reaction is GTP + H2O = GDP + phosphate + H(+). Tubulin is the major constituent of microtubules, protein filaments consisting of alpha- and beta-tubulin heterodimers. Microtubules grow by the addition of GTP-tubulin dimers to the microtubule end, where a stabilizing cap forms. Below the cap, tubulin dimers are in GDP-bound state, owing to GTPase activity of alpha-tubulin. The sequence is that of Tubulin alpha-1A chain (TUBA1A) from Sus scrofa (Pig).